Reading from the N-terminus, the 252-residue chain is Phosphoglycolate phosphatase (252 aa).

D13 (nucleophile) is an active-site residue. Positions 13, 15, and 192 each coordinate Mg(2+).

It belongs to the HAD-like hydrolase superfamily. CbbY/CbbZ/Gph/YieH family. As to quaternary structure, monomer. Mg(2+) serves as cofactor. It depends on chloride as a cofactor.

The enzyme catalyses 2-phosphoglycolate + H2O = glycolate + phosphate. It participates in organic acid metabolism; glycolate biosynthesis; glycolate from 2-phosphoglycolate: step 1/1. Functionally, specifically catalyzes the dephosphorylation of 2-phosphoglycolate. Is involved in the dissimilation of the intracellular 2-phosphoglycolate formed during the DNA repair of 3'-phosphoglycolate ends, a major class of DNA lesions induced by oxidative stress. In Shigella boydii serotype 4 (strain Sb227), this protein is Phosphoglycolate phosphatase.